The sequence spans 506 residues: Glutamate--tRNA ligase (506 aa).

Residues 21–31 carry the 'HIGH' region motif; the sequence is PSPTGIPHVGM. The 'KMSKS' region motif lies at 265–269; the sequence is KLSKR. Residue Lys-268 coordinates ATP.

This sequence belongs to the class-I aminoacyl-tRNA synthetase family. Glutamate--tRNA ligase type 1 subfamily. As to quaternary structure, monomer.

It localises to the cytoplasm. It catalyses the reaction tRNA(Glu) + L-glutamate + ATP = L-glutamyl-tRNA(Glu) + AMP + diphosphate. Its function is as follows. Catalyzes the attachment of glutamate to tRNA(Glu) in a two-step reaction: glutamate is first activated by ATP to form Glu-AMP and then transferred to the acceptor end of tRNA(Glu). The chain is Glutamate--tRNA ligase from Bifidobacterium adolescentis (strain ATCC 15703 / DSM 20083 / NCTC 11814 / E194a).